The primary structure comprises 185 residues: Peptidyl-tRNA hydrolase (185 aa).

A tRNA-binding site is contributed by Tyr-14. The Proton acceptor role is filled by His-19. The tRNA site is built by Tyr-65, Asn-67, and Asn-113.

Belongs to the PTH family. As to quaternary structure, monomer.

Its subcellular location is the cytoplasm. The catalysed reaction is an N-acyl-L-alpha-aminoacyl-tRNA + H2O = an N-acyl-L-amino acid + a tRNA + H(+). Its function is as follows. Hydrolyzes ribosome-free peptidyl-tRNAs (with 1 or more amino acids incorporated), which drop off the ribosome during protein synthesis, or as a result of ribosome stalling. Functionally, catalyzes the release of premature peptidyl moieties from peptidyl-tRNA molecules trapped in stalled 50S ribosomal subunits, and thus maintains levels of free tRNAs and 50S ribosomes. The polypeptide is Peptidyl-tRNA hydrolase (Rickettsia bellii (strain RML369-C)).